The primary structure comprises 196 residues: Fe/S biogenesis protein NfuA (196 aa).

[4Fe-4S] cluster contacts are provided by C154 and C157.

This sequence belongs to the NfuA family. Homodimer. [4Fe-4S] cluster serves as cofactor.

Involved in iron-sulfur cluster biogenesis. Binds a 4Fe-4S cluster, can transfer this cluster to apoproteins, and thereby intervenes in the maturation of Fe/S proteins. Could also act as a scaffold/chaperone for damaged Fe/S proteins. The sequence is that of Fe/S biogenesis protein NfuA from Blochmanniella pennsylvanica (strain BPEN).